A 231-amino-acid polypeptide reads, in one-letter code: Ion-translocating oxidoreductase complex subunit E (231 aa).

6 helical membrane passes run 18-38 (ALVQ…ATNA), 39-59 (LGLG…ISTL), 63-83 (TPAE…VSAV), 86-106 (LINA…PLIV), 125-145 (ALSA…MFVL), and 182-202 (PFLL…MLAG).

Belongs to the NqrDE/RnfAE family. The complex is composed of six subunits: RsxA, RsxB, RsxC, RsxD, RsxE and RsxG.

Its subcellular location is the cell inner membrane. Its function is as follows. Part of a membrane-bound complex that couples electron transfer with translocation of ions across the membrane. Required to maintain the reduced state of SoxR. This chain is Ion-translocating oxidoreductase complex subunit E, found in Shigella flexneri serotype 5b (strain 8401).